Here is a 242-residue protein sequence, read N- to C-terminus: Ribonuclease PH (242 aa).

Residues Arg89 and 127 to 129 (GTR) contribute to the phosphate site.

Belongs to the RNase PH family. As to quaternary structure, homohexameric ring arranged as a trimer of dimers.

The enzyme catalyses tRNA(n+1) + phosphate = tRNA(n) + a ribonucleoside 5'-diphosphate. Its function is as follows. Phosphorolytic 3'-5' exoribonuclease that plays an important role in tRNA 3'-end maturation. Removes nucleotide residues following the 3'-CCA terminus of tRNAs; can also add nucleotides to the ends of RNA molecules by using nucleoside diphosphates as substrates, but this may not be physiologically important. Probably plays a role in initiation of 16S rRNA degradation (leading to ribosome degradation) during starvation. This is Ribonuclease PH from Neisseria meningitidis serogroup A / serotype 4A (strain DSM 15465 / Z2491).